The following is a 142-amino-acid chain: uncharacterized protein (142 aa).

Residues 75 to 91 (YAAILAQVSFAFLCTGF) form a helical membrane-spanning segment.

It is found in the membrane. This is an uncharacterized protein from Haemophilus influenzae (strain ATCC 51907 / DSM 11121 / KW20 / Rd).